The sequence spans 1180 residues: MARYKNPKSPAKLKQQIVLPTCKLDSNLVLLPGIIYNVTFSRFKAAALLYRYKDLVSQVSIINNLLNEYEFNPSKDSDSVEEDDMVTSPITISKVAVEGIEQFFKYEAAFKNSQGLVSEKDIAEVAPSNEFDWLTLAIKPNLEKIKEPSNAQIDPTEHNSVVTIARIVGIVDDTTNIKLTLQAITRGLKIAPKKKTRPNEQLLEVDWSSDIPELRRHFKSLKDSSLDLFKVIDKFIVDYRQALSINSANGNKSNLQITKPGSRYKGANGSSQKPGDLLTLNPLANALYLQLAGSKDFSKAFLSLQKLYGQFASDENLKVDTKSYLRLLDLTCGILPFPNHEKLKLLHKISIDDRGNELINMINQLIKIFDTLDGNNSFVNHWFYNEATNIQKANVVANQLKSIRLLLEGMTNKTRPISNRGNIKSFNNSENGNNNKTNGSGITSRRPKSNEDGGEVYDEEDDDEEDDELRAITNFIKYKLPNITTLSPDSKRLIIKDFKRIRASSQSPGGGGNSDFHVIRNYLEIVMDIPWDKYVTKFKSNKDIDLNFAKKQLDDDHYGLEHVKKRLIQYLVVLKLLGINAEKQISDFRKENQVPSPSSSGSNLATQNSLVPASSIVIANNDETSFAHKQAQNKVKTSIKESNIENQTNQSIQVTKYNKSPIIMLAGPPGTGKTSLAKSIASSLGRNFQRISLGGVKDESEIRGHRRTYVGAMPGLIIQALRKSRSMNPVILLDEIDKVIGGSSGVNKFNGDPSAALLEVLDPEQNTSFIDHYLGFPVDLSQVIFICTANEPHNLTRPLLDRLEMIEVSAYDYNEKLIIGRKYLLPRQVKRNGFPASDRIEEFVNIDDASMKKIIVDYTREAGVRNLERKLGTICRFKAVEYCEGLSGKSFYNPNVEEADLPKYLGIPYSSGDFSSIETTISNNSRVGIVNGLSYNSDGSGSVLVFETIGFDKRVGNPNSSNTGCSLVMTGRLGEVLMESGKIGLTFIKSLIYKNLIQAKEQPDDKYLIEKFNNLELNLHVPMGSISKDGPSAGITMATSFLSVILDKPVPADVAMTGEITLRGLVLPIGGVKEKMMGAHLNGNIRRMIVPRENRKDLIEEFSRSVEEAGDVVDSNLMNELLKDNEEADFKMDKVEKFYLKRYGIQIFYAREFYDVMKILWGEDDLLTKPKSNRILEYHL.

A Lon N-terminal domain is found at 19-366; that stretch reads LPTCKLDSNL…ELINMINQLI (348 aa). The disordered stretch occupies residues 416–465; sequence PISNRGNIKSFNNSENGNNNKTNGSGITSRRPKSNEDGGEVYDEEDDDEE. The span at 422–444 shows a compositional bias: low complexity; the sequence is NIKSFNNSENGNNNKTNGSGITS. A compositionally biased stretch (acidic residues) spans 452 to 465; it reads DGGEVYDEEDDDEE. 667 to 674 is an ATP binding site; sequence GPPGTGKT. Residues 924–1163 form the Lon proteolytic domain; it reads NSRVGIVNGL…YDVMKILWGE (240 aa). Residues Ser1032 and Lys1075 contribute to the active site.

This sequence belongs to the peptidase S16 family.

It is found in the peroxisome matrix. The enzyme catalyses Hydrolysis of proteins in presence of ATP.. In terms of biological role, ATP-dependent serine protease that mediates the selective degradation of misfolded and unassembled polypeptides in the peroxisomal matrix. Necessary for type 2 peroxisome targeting signal (PTS2)-containing protein processing and facilitates peroxisome matrix protein import. The protein is Lon protease homolog 2, peroxisomal of Scheffersomyces stipitis (strain ATCC 58785 / CBS 6054 / NBRC 10063 / NRRL Y-11545) (Yeast).